The primary structure comprises 227 residues: UMP-CMP kinase (227 aa).

35-40 (GAGKGT) serves as a coordination point for ATP. The interval 55–85 (SAGDLLRAEQHREGSEYGQLIQTCIKEGSIV) is NMP. A ribonucleoside 5'-phosphate-binding positions include Arg-61, 83-85 (SIV), 122-125 (GFPR), and Gln-129. The tract at residues 159–169 (ERGKTSGREDD) is LID. An ATP-binding site is contributed by Arg-160. A ribonucleoside 5'-phosphate contacts are provided by Arg-166 and Arg-177. Val-205 serves as a coordination point for ATP.

This sequence belongs to the adenylate kinase family. UMP-CMP kinase subfamily. In terms of assembly, monomer. Mg(2+) is required as a cofactor.

Its subcellular location is the cytoplasm. It localises to the nucleus. The enzyme catalyses UMP + ATP = UDP + ADP. Catalyzes the phosphorylation of pyrimidine nucleoside monophosphates at the expense of ATP. Plays an important role in de novo pyrimidine nucleotide biosynthesis. Has preference for UMP and CMP as phosphate acceptors, but can also use AMP and dCMP to a lesser extent. May play a role during the formation of basidiospores in the gill tissue. In Lentinula edodes (Shiitake mushroom), this protein is UMP-CMP kinase (uck1).